Reading from the N-terminus, the 335-residue chain is Methylthioribose-1-phosphate isomerase (335 aa).

Substrate is bound by residues 43-45 (RGA), Arg86, and Gln193. The active-site Proton donor is Asp234. 244–245 (NK) lines the substrate pocket.

Belongs to the eIF-2B alpha/beta/delta subunits family. MtnA subfamily.

It catalyses the reaction 5-(methylsulfanyl)-alpha-D-ribose 1-phosphate = 5-(methylsulfanyl)-D-ribulose 1-phosphate. Its pathway is amino-acid biosynthesis; L-methionine biosynthesis via salvage pathway; L-methionine from S-methyl-5-thio-alpha-D-ribose 1-phosphate: step 1/6. Its function is as follows. Catalyzes the interconversion of methylthioribose-1-phosphate (MTR-1-P) into methylthioribulose-1-phosphate (MTRu-1-P). The polypeptide is Methylthioribose-1-phosphate isomerase (Parabacteroides distasonis (strain ATCC 8503 / DSM 20701 / CIP 104284 / JCM 5825 / NCTC 11152)).